Reading from the N-terminus, the 37-residue chain is Large ribosomal subunit protein bL36 (37 aa).

Belongs to the bacterial ribosomal protein bL36 family.

In Salinispora arenicola (strain CNS-205), this protein is Large ribosomal subunit protein bL36.